Here is a 205-residue protein sequence, read N- to C-terminus: Small ribosomal subunit protein uS4 (205 aa).

The tract at residues 17–46 is disordered; that stretch reads ENIWGRPKSPVNKREYGPGQHGQRRKGKLS. The 64-residue stretch at 94-157 folds into the S4 RNA-binding domain; sequence SRLDAVVYRA…KQLVIVLESV (64 aa).

This sequence belongs to the universal ribosomal protein uS4 family. As to quaternary structure, part of the 30S ribosomal subunit. Contacts protein S5. The interaction surface between S4 and S5 is involved in control of translational fidelity.

One of the primary rRNA binding proteins, it binds directly to 16S rRNA where it nucleates assembly of the body of the 30S subunit. Functionally, with S5 and S12 plays an important role in translational accuracy. The protein is Small ribosomal subunit protein uS4 of Mesorhizobium japonicum (strain LMG 29417 / CECT 9101 / MAFF 303099) (Mesorhizobium loti (strain MAFF 303099)).